The sequence spans 139 residues: Putative pre-16S rRNA nuclease (139 aa).

It belongs to the YqgF nuclease family.

It localises to the cytoplasm. In terms of biological role, could be a nuclease involved in processing of the 5'-end of pre-16S rRNA. This Caldanaerobacter subterraneus subsp. tengcongensis (strain DSM 15242 / JCM 11007 / NBRC 100824 / MB4) (Thermoanaerobacter tengcongensis) protein is Putative pre-16S rRNA nuclease.